The primary structure comprises 95 residues: UPF0473 protein BPUM_2377 (95 aa).

The protein belongs to the UPF0473 family.

The chain is UPF0473 protein BPUM_2377 from Bacillus pumilus (strain SAFR-032).